The chain runs to 206 residues: Large ribosomal subunit protein uL4 (206 aa).

Residues 47 to 75 (GTQSAKTRAEVSGGGIKPWRQKGTGRARQ) are disordered.

The protein belongs to the universal ribosomal protein uL4 family. In terms of assembly, part of the 50S ribosomal subunit.

One of the primary rRNA binding proteins, this protein initially binds near the 5'-end of the 23S rRNA. It is important during the early stages of 50S assembly. It makes multiple contacts with different domains of the 23S rRNA in the assembled 50S subunit and ribosome. Functionally, forms part of the polypeptide exit tunnel. This chain is Large ribosomal subunit protein uL4, found in Clostridium botulinum (strain 657 / Type Ba4).